Consider the following 294-residue polypeptide: Elongation factor Ts (294 aa).

Positions 80–83 (TDFV) are involved in Mg(2+) ion dislocation from EF-Tu.

This sequence belongs to the EF-Ts family.

The protein resides in the cytoplasm. Associates with the EF-Tu.GDP complex and induces the exchange of GDP to GTP. It remains bound to the aminoacyl-tRNA.EF-Tu.GTP complex up to the GTP hydrolysis stage on the ribosome. The polypeptide is Elongation factor Ts (Polynucleobacter asymbioticus (strain DSM 18221 / CIP 109841 / QLW-P1DMWA-1) (Polynucleobacter necessarius subsp. asymbioticus)).